The following is a 728-amino-acid chain: Catalase-peroxidase 1 (728 aa).

The segment at residues Trp91 to Tyr218 is a cross-link (tryptophyl-tyrosyl-methioninium (Trp-Tyr) (with M-244)). The Proton acceptor role is filled by His92. Positions Tyr218–Met244 form a cross-link, tryptophyl-tyrosyl-methioninium (Tyr-Met) (with W-91). His259 is a binding site for heme b.

The protein belongs to the peroxidase family. Peroxidase/catalase subfamily. In terms of assembly, homodimer or homotetramer. Requires heme b as cofactor. Formation of the three residue Trp-Tyr-Met cross-link is important for the catalase, but not the peroxidase activity of the enzyme.

It carries out the reaction H2O2 + AH2 = A + 2 H2O. The catalysed reaction is 2 H2O2 = O2 + 2 H2O. Bifunctional enzyme with both catalase and broad-spectrum peroxidase activity. This is Catalase-peroxidase 1 from Burkholderia vietnamiensis (strain G4 / LMG 22486) (Burkholderia cepacia (strain R1808)).